The sequence spans 370 residues: Calcium/calmodulin-dependent protein kinase type 1 (370 aa).

In terms of domain architecture, Protein kinase spans 20–276; it reads YDFRDVLGTG…CEQALQHPWI (257 aa). ATP-binding positions include 26 to 34 and K49; that span reads LGTGAFSEV. K59 participates in a covalent cross-link: Glycyl lysine isopeptide (Lys-Gly) (interchain with G-Cter in ubiquitin). The Proton acceptor role is filled by D141. T177 is modified (phosphothreonine; by CaMKK1 and CaMKK2). The autoinhibitory domain stretch occupies residues 276-316; sequence IAGDTALDKNIHQSVSEQIKKNFAKSKWKQAFNATAVVRHM. The calmodulin-binding stretch occupies residues 296 to 317; that stretch reads KNFAKSKWKQAFNATAVVRHMR. The short motif at 315 to 321 is the Nuclear export signal element; the sequence is HMRKLQL. S363 is subject to Phosphoserine.

Belongs to the protein kinase superfamily. CAMK Ser/Thr protein kinase family. CaMK subfamily. In terms of assembly, monomer. Interacts with XPO1. Interacts with MARK2, ARHGEF7/BETAPIX and GIT1. Phosphorylated by CaMKK1 and CaMKK2 on Thr-177. Post-translationally, polybiquitinated by the E3 ubiquitin-protein ligase complex SCF(FBXL12), leading to proteasomal degradation. Widely expressed. Expressed in cells of the zona glomerulosa of the adrenal cortex.

Its subcellular location is the cytoplasm. It localises to the nucleus. The enzyme catalyses L-seryl-[protein] + ATP = O-phospho-L-seryl-[protein] + ADP + H(+). It catalyses the reaction L-threonyl-[protein] + ATP = O-phospho-L-threonyl-[protein] + ADP + H(+). Its activity is regulated as follows. Activated by Ca(2+)/calmodulin. Binding of calmodulin results in conformational change that relieves intrasteric autoinhibition and allows phosphorylation of Thr-177 within the activation loop by CaMKK1 or CaMKK2. Phosphorylation of Thr-177 results in several fold increase in total activity. Unlike CaMK4, is unable to exhibit autonomous activity after Ca(2+)/calmodulin activation. Functionally, calcium/calmodulin-dependent protein kinase that operates in the calcium-triggered CaMKK-CaMK1 signaling cascade and, upon calcium influx, regulates transcription activators activity, cell cycle, hormone production, cell differentiation, actin filament organization and neurite outgrowth. Recognizes the substrate consensus sequence [MVLIF]-x-R-x(2)-[ST]-x(3)-[MVLIF]. Regulates axonal extension and growth cone motility in hippocampal and cerebellar nerve cells. Upon NMDA receptor-mediated Ca(2+) elevation, promotes dendritic growth in hippocampal neurons and is essential in synapses for full long-term potentiation (LTP) and ERK2-dependent translational activation. Downstream of NMDA receptors, promotes the formation of spines and synapses in hippocampal neurons by phosphorylating ARHGEF7/BETAPIX on 'Ser-694', which results in the enhancement of ARHGEF7 activity and activation of RAC1. Promotes neuronal differentiation and neurite outgrowth by activation and phosphorylation of MARK2 on 'Ser-91', 'Ser-92', 'Ser-93' and 'Ser-294'. Promotes nuclear export of HDAC5 and binding to 14-3-3 by phosphorylation of 'Ser-259' and 'Ser-498' in the regulation of muscle cell differentiation. Regulates NUMB-mediated endocytosis by phosphorylation of NUMB on 'Ser-276' and 'Ser-295'. Involved in the regulation of basal and estrogen-stimulated migration of medulloblastoma cells through ARHGEF7/BETAPIX phosphorylation. Is required for proper activation of cyclin-D1/CDK4 complex during G1 progression in diploid fibroblasts. Plays a role in K(+) and ANG2-mediated regulation of the aldosterone synthase (CYP11B2) to produce aldosterone in the adrenal cortex. Phosphorylates EIF4G3/eIF4GII. In vitro phosphorylates CREB1, ATF1, CFTR, MYL9 and SYN1/synapsin I. The polypeptide is Calcium/calmodulin-dependent protein kinase type 1 (CAMK1) (Homo sapiens (Human)).